The chain runs to 67 residues: UPF0434 protein Patl_1782 (67 aa).

It belongs to the UPF0434 family.

This is UPF0434 protein Patl_1782 from Pseudoalteromonas atlantica (strain T6c / ATCC BAA-1087).